Here is a 192-residue protein sequence, read N- to C-terminus: Cytidylate kinase (192 aa).

An ATP-binding site is contributed by 7-15 (GPPGSGKST).

It belongs to the cytidylate kinase family. Type 2 subfamily.

The protein localises to the cytoplasm. The enzyme catalyses CMP + ATP = CDP + ADP. The catalysed reaction is dCMP + ATP = dCDP + ADP. This is Cytidylate kinase from Halorubrum lacusprofundi (strain ATCC 49239 / DSM 5036 / JCM 8891 / ACAM 34).